A 242-amino-acid polypeptide reads, in one-letter code: Segregation and condensation protein A (242 aa).

The protein belongs to the ScpA family. As to quaternary structure, component of a cohesin-like complex composed of ScpA, ScpB and the Smc homodimer, in which ScpA and ScpB bind to the head domain of Smc. The presence of the three proteins is required for the association of the complex with DNA.

It localises to the cytoplasm. In terms of biological role, participates in chromosomal partition during cell division. May act via the formation of a condensin-like complex containing Smc and ScpB that pull DNA away from mid-cell into both cell halves. In Lactococcus lactis subsp. cremoris (strain SK11), this protein is Segregation and condensation protein A.